The sequence spans 1111 residues: RecBCD enzyme subunit RecC (1111 aa).

This sequence belongs to the RecC family. As to quaternary structure, heterotrimer of RecB, RecC and RecD. All subunits contribute to DNA-binding.

Its function is as follows. A helicase/nuclease that prepares dsDNA breaks (DSB) for recombinational DNA repair. Binds to DSBs and unwinds DNA via a highly rapid and processive ATP-dependent bidirectional helicase activity. Unwinds dsDNA until it encounters a Chi (crossover hotspot instigator) sequence from the 3' direction. Cuts ssDNA a few nucleotides 3' to the Chi site. The properties and activities of the enzyme are changed at Chi. The Chi-altered holoenzyme produces a long 3'-ssDNA overhang and facilitates RecA-binding to the ssDNA for homologous DNA recombination and repair. Holoenzyme degrades any linearized DNA that is unable to undergo homologous recombination. In the holoenzyme this subunit recognizes the wild-type Chi sequence, and when added to isolated RecB increases its ATP-dependent helicase processivity. This Buchnera aphidicola subsp. Baizongia pistaciae (strain Bp) protein is RecBCD enzyme subunit RecC.